We begin with the raw amino-acid sequence, 423 residues long: Protein CLP1 homolog (423 aa).

ATP is bound by residues glutamate 16, lysine 57, and 119-124; that span reads DVGKST.

Belongs to the Clp1 family. Clp1 subfamily.

The protein resides in the nucleus. Functionally, required for endonucleolytic cleavage during polyadenylation-dependent pre-mRNA 3'-end formation. The chain is Protein CLP1 homolog (cbc) from Drosophila simulans (Fruit fly).